A 162-amino-acid polypeptide reads, in one-letter code: Translocator protein 2 (162 aa).

The next 5 membrane-spanning stretches (helical) occupy residues 3–23 (LQGPVFVGVPLLGPILICMLI), 44–64 (VILLVWVTIYSVMGYASYLVW), 79–99 (LGLYSFQLALSWTFLVLFLAA), 103–123 (GLALLDLLLLYGLVASLVFIW), and 129–149 (LAALLLLPYLAWLTVTTAITY).

This sequence belongs to the TspO/BZRP family. As to quaternary structure, homotetramer. May also form homodimer. As to expression, expressed in liver, bone marrow and spleen. In spleen, detected in red pulp but not in white pulp.

The protein resides in the endoplasmic reticulum membrane. It is found in the cell membrane. Functionally, cholesterol-binding protein involved in the redistribution of cholesterol from lipid droplets to the endoplasmic reticulum. Required to meet cholesterol demands during erythropoietic differentiation. May play a role in transport processes at the plasma membrane of erythrocytes, including regulating VDAC-mediated ATP export, and import of the heme precursors protoporphyrin IX and 5-aminolevulinic acid. The polypeptide is Translocator protein 2 (Tspo2) (Mus musculus (Mouse)).